The following is a 545-amino-acid chain: Intercellular adhesion molecule 1 (545 aa).

The first 27 residues, 1 to 27 (MASTRARPMLPLLLVLVAVVIPGPVGA), serve as a signal peptide directing secretion. At 28 to 492 (QVSIHPTEAF…HLTVLYHDQN (465 aa)) the chain is on the extracellular side. Ig-like C2-type domains lie at 41–103 (GGSV…QSSA) and 128–193 (GKNL…LDLR). The N-linked (GlcNAc...) asparagine glycan is linked to asparagine 47. 3 disulfide bridges follow: cysteine 48–cysteine 92, cysteine 52–cysteine 96, and cysteine 135–cysteine 186. Asparagine 154 carries N-linked (GlcNAc...) asparagine glycosylation. A Cell attachment site motif is present at residues 177–179 (RGD). Asparagine 183 and asparagine 202 each carry an N-linked (GlcNAc...) asparagine glycan. Residues 230–297 (GTQQKFLCSL…LRCVLELADQ (68 aa)) form the Ig-like C2-type 3 domain. The cysteines at positions 237 and 290 are disulfide-linked. 6 N-linked (GlcNAc...) asparagine glycosylation sites follow: asparagine 309, asparagine 344, asparagine 396, asparagine 417, asparagine 439, and asparagine 464. The Ig-like C2-type 4 domain maps to 325–389 (GDQVTVKCEA…FFCSAALEVD (65 aa)). An intrachain disulfide couples cysteine 332 to cysteine 382. Residues 343–365 (LNSTSPRPPTSQGTSPRPPTSQI) are disordered. Intrachain disulfides connect cysteine 414-cysteine 430, cysteine 430-cysteine 469, and cysteine 442-cysteine 469. The Ig-like C2-type 5 domain occupies 423–476 (GSQQTLTCQPQGNPAPNLTCSRKADGVPLPIGMVKSVKREMNGTYKCRAFSSRG). Residues 493–517 (TWVIIVGVLVLIIAGFVIVASIYTY) form a helical membrane-spanning segment. Residues 518-545 (YRQRKIRIYKLQKAQEEALKLKVQAPPP) are Cytoplasmic-facing.

It belongs to the immunoglobulin superfamily. ICAM family. As to quaternary structure, homodimer. Interacts with MUC1 and promotes cell aggregation in epithelial cells. Interacts with ARHGEF26/SGEF. Interacts (on T cell side) with CD81, CD247 and CD9 at immunological synapses between antigen-presenting cells and T cells. Post-translationally, monoubiquitinated, which is promoted by MARCH9 and leads to endocytosis.

Its subcellular location is the membrane. In terms of biological role, ICAM proteins are ligands for the leukocyte adhesion protein LFA-1 (integrin alpha-L/beta-2). During leukocyte trans-endothelial migration, ICAM1 engagement promotes the assembly of endothelial apical cups through ARHGEF26/SGEF and RHOG activation. The polypeptide is Intercellular adhesion molecule 1 (Icam1) (Rattus norvegicus (Rat)).